We begin with the raw amino-acid sequence, 377 residues long: Carboxynorspermidine/carboxyspermidine decarboxylase (377 aa).

Residue Lys-41 is modified to N6-(pyridoxal phosphate)lysine. Substrate-binding residues include Glu-238 and Asp-274.

It belongs to the Orn/Lys/Arg decarboxylase class-II family. NspC subfamily. Homodimer. It depends on pyridoxal 5'-phosphate as a cofactor.

The protein localises to the cytoplasm. The enzyme catalyses carboxynorspermidine + H(+) = norspermidine + CO2. The catalysed reaction is carboxyspermidine + H(+) = spermidine + CO2. Its function is as follows. Catalyzes the decarboxylation of carboxynorspermidine and carboxyspermidine. Carboxynorspermidine is decarboxylated 20-fold more efficiently than carboxyspermidine. Exhibits some activity with L-ornithine, but shows no activity with L-arginine, L-lysine or meso-diaminopimelate. The chain is Carboxynorspermidine/carboxyspermidine decarboxylase from Vibrio vulnificus (strain CMCP6).